The following is a 370-amino-acid chain: DNA primase large subunit PriL (370 aa).

[4Fe-4S] cluster-binding residues include C268, C341, C350, and C354.

The protein belongs to the eukaryotic-type primase large subunit family. As to quaternary structure, heterodimer of a small subunit (PriS) and a large subunit (PriL). [4Fe-4S] cluster is required as a cofactor.

In terms of biological role, regulatory subunit of DNA primase, an RNA polymerase that catalyzes the synthesis of short RNA molecules used as primers for DNA polymerase during DNA replication. Stabilizes and modulates the activity of the small subunit, increasing the rate of DNA synthesis, and conferring RNA synthesis capability. The DNA polymerase activity may enable DNA primase to also catalyze primer extension after primer synthesis. May also play a role in DNA repair. The sequence is that of DNA primase large subunit PriL from Archaeoglobus fulgidus (strain ATCC 49558 / DSM 4304 / JCM 9628 / NBRC 100126 / VC-16).